Consider the following 405-residue polypeptide: Tryptophan synthase beta chain (405 aa).

Lys-98 bears the N6-(pyridoxal phosphate)lysine mark.

This sequence belongs to the TrpB family. Tetramer of two alpha and two beta chains. Requires pyridoxal 5'-phosphate as cofactor.

The catalysed reaction is (1S,2R)-1-C-(indol-3-yl)glycerol 3-phosphate + L-serine = D-glyceraldehyde 3-phosphate + L-tryptophan + H2O. The protein operates within amino-acid biosynthesis; L-tryptophan biosynthesis; L-tryptophan from chorismate: step 5/5. The beta subunit is responsible for the synthesis of L-tryptophan from indole and L-serine. The chain is Tryptophan synthase beta chain from Xanthomonas oryzae pv. oryzae (strain MAFF 311018).